Here is a 217-residue protein sequence, read N- to C-terminus: Coiled-coil domain-containing protein 124-A (217 aa).

The disordered stretch occupies residues 1-128 (MPKKFQGENT…HLEMPLEENV (128 aa)). Composition is skewed to basic and acidic residues over residues 18–45 (RKAE…DDKH), 52–74 (RKED…QRLL), and 95–128 (TRAE…EENV). A coiled-coil region spans residues 46 to 82 (VARKGQRKEDKEKKRLEQLERKKESQRLLDEEDSKMK).

The protein belongs to the CCDC124 family. In terms of assembly, associates with translationally inactive ribosomes in the nonrotated state.

It is found in the cytoplasm. It localises to the cytoskeleton. The protein localises to the microtubule organizing center. The protein resides in the centrosome. Its subcellular location is the midbody. Functionally, ribosome-binding protein involved in ribosome hibernation: associates with translationally inactive ribosomes and stabilizes the nonrotated conformation of the 80S ribosome, thereby promoting ribosome preservation and storage. This Xenopus laevis (African clawed frog) protein is Coiled-coil domain-containing protein 124-A (ccdc124-a).